The sequence spans 387 residues: EARP-interacting protein homolog (387 aa).

4 WD repeats span residues 132–172 (SAHG…AKAT), 182–222 (KGQL…QIYC), 226–266 (AHGQ…EPVK), and 270–310 (EHSH…SEPF). The interval 309-337 (PFGHLVDDDDLSDPEENQQEDKGKEPLQD) is disordered. A compositionally biased stretch (acidic residues) spans 315–326 (DDDDLSDPEENQ). The WD 5 repeat unit spans residues 345–385 (EHEDSVYAVEWSAADPWLFASLSYDGRLVINRVPRALKYRI).

This sequence belongs to the WD repeat EIPR1 family.

It is found in the golgi apparatus. The protein resides in the trans-Golgi network. Its function is as follows. May act as a component of endosomal retrieval machinery that is involved in protein transport from early endosomes to either recycling endosomes or the trans-Golgi network. The polypeptide is EARP-interacting protein homolog (Danio rerio (Zebrafish)).